Consider the following 262-residue polypeptide: MARGLKKHLKRLNAPRHWMLDKLGGAFAPKPSSGPHKSRECLPLILILRNRLKYALTYREVIAILMQRHVMVDGKVRTDKTYPAGFMDVVSIPKTNEDFRLLYDTKGRFCLHAITGDETKFKLCKVRSVQFGQKGIPYLNTYDGRTIRYPDPLIKANDTIKLDLESNKIVDFIKFDVGNVVMVTGGRNRGRVGVIKNREKHKGSFETIHVQDAAGHEFATRLGNVFTIGKGTKPWVSLPKRKGIKLSIIEEARKRLAAQNAA.

The 63-residue stretch at Leu42–Asp104 folds into the S4 RNA-binding domain.

The protein belongs to the eukaryotic ribosomal protein eS4 family.

The protein localises to the cytoplasm. The sequence is that of Small ribosomal subunit protein eS4 (RPS4) from Gossypium hirsutum (Upland cotton).